Here is a 497-residue protein sequence, read N- to C-terminus: Glutamate--tRNA ligase (497 aa).

Positions 12–22 (PSPTGHLHIGN) match the 'HIGH' region motif. Positions 259-263 (KLSKR) match the 'KMSKS' region motif. K262 serves as a coordination point for ATP.

This sequence belongs to the class-I aminoacyl-tRNA synthetase family. Glutamate--tRNA ligase type 1 subfamily. As to quaternary structure, monomer.

Its subcellular location is the cytoplasm. The catalysed reaction is tRNA(Glu) + L-glutamate + ATP = L-glutamyl-tRNA(Glu) + AMP + diphosphate. In terms of biological role, catalyzes the attachment of glutamate to tRNA(Glu) in a two-step reaction: glutamate is first activated by ATP to form Glu-AMP and then transferred to the acceptor end of tRNA(Glu). The sequence is that of Glutamate--tRNA ligase from Lacticaseibacillus casei (strain BL23) (Lactobacillus casei).